The primary structure comprises 421 residues: Testin (421 aa).

Positions 92 to 199 (MILTNPVAAK…GDVKLPRDMN (108 aa)) constitute a PET domain. Disordered regions lie at residues 133–164 (EKQP…PSKC) and 193–213 (KLPR…GGDR). A compositionally biased stretch (basic and acidic residues) spans 155–164 (PAHDQDPSKC). LIM zinc-binding domains are found at residues 234-297 (YSCY…CDSE), 299-359 (PRCA…NHAV), and 362-421 (QGCH…KMMS).

It belongs to the prickle / espinas / testin family. As to quaternary structure, interacts via LIM domain 1 with ZYX. Interacts (via LIM domain 3) with ENAH and VASP. Interacts with ALKBH4, talin, actin, alpha-actinin, GRIP1 and PXN. Interacts (via LIM domain 2) with ACTL7A (via N-terminus). Heterodimer with ACTL7A; the heterodimer interacts with ENAH to form a heterotrimer.

It localises to the cytoplasm. Its subcellular location is the cell junction. The protein localises to the focal adhesion. Functionally, scaffold protein that may play a role in cell adhesion, cell spreading and in the reorganization of the actin cytoskeleton. Plays a role in the regulation of cell proliferation. May act as a tumor suppressor. In Muntiacus muntjak (Barking deer), this protein is Testin (TES).